Reading from the N-terminus, the 423-residue chain is Histidine--tRNA ligase (423 aa).

It belongs to the class-II aminoacyl-tRNA synthetase family. As to quaternary structure, homodimer.

It is found in the cytoplasm. The enzyme catalyses tRNA(His) + L-histidine + ATP = L-histidyl-tRNA(His) + AMP + diphosphate + H(+). The chain is Histidine--tRNA ligase from Actinobacillus pleuropneumoniae serotype 7 (strain AP76).